Here is a 231-residue protein sequence, read N- to C-terminus: MKRAVVVFSGGQDSTTCLAQARHQYDEVHCVTFDYGQRHRAEIDVARALALKLGARAHKVLDVTLLNELAVSSLTRDSIPVPDYEPNADGIPNTFVPGRNILFLTLVAIYAYQVKAEAVITGVCETDFSGYPDCRDEFVKALNHAVNLGMAKDIRFETPLMWIDKAETWALADYWGQLDLVREETLTCYNGIKGDGCGHCAACNLRANGLNHYLSNKSAVMAAMKQKTGLR.

Position 8 to 18 (8 to 18 (FSGGQDSTTCL)) interacts with ATP. Zn(2+) contacts are provided by Cys-188, Cys-197, Cys-200, and Cys-203.

This sequence belongs to the QueC family. Zn(2+) is required as a cofactor.

The enzyme catalyses 7-carboxy-7-deazaguanine + NH4(+) + ATP = 7-cyano-7-deazaguanine + ADP + phosphate + H2O + H(+). The protein operates within purine metabolism; 7-cyano-7-deazaguanine biosynthesis. Functionally, catalyzes the ATP-dependent conversion of 7-carboxy-7-deazaguanine (CDG) to 7-cyano-7-deazaguanine (preQ(0)). The sequence is that of 7-cyano-7-deazaguanine synthase from Salmonella paratyphi A (strain ATCC 9150 / SARB42).